Reading from the N-terminus, the 510-residue chain is ATP synthase subunit alpha (510 aa).

Gly-169–Thr-176 contacts ATP.

The protein belongs to the ATPase alpha/beta chains family. In terms of assembly, F-type ATPases have 2 components, CF(1) - the catalytic core - and CF(0) - the membrane proton channel. CF(1) has five subunits: alpha(3), beta(3), gamma(1), delta(1), epsilon(1). CF(0) has three main subunits: a(1), b(2) and c(9-12). The alpha and beta chains form an alternating ring which encloses part of the gamma chain. CF(1) is attached to CF(0) by a central stalk formed by the gamma and epsilon chains, while a peripheral stalk is formed by the delta and b chains.

It localises to the cell inner membrane. It catalyses the reaction ATP + H2O + 4 H(+)(in) = ADP + phosphate + 5 H(+)(out). Functionally, produces ATP from ADP in the presence of a proton gradient across the membrane. The alpha chain is a regulatory subunit. This chain is ATP synthase subunit alpha, found in Anaeromyxobacter dehalogenans (strain 2CP-C).